The chain runs to 159 residues: Ribosomal RNA large subunit methyltransferase H (159 aa).

S-adenosyl-L-methionine is bound by residues Leu-76, Gly-108, and 127 to 132; that span reads FSKMTL.

The protein belongs to the RNA methyltransferase RlmH family. As to quaternary structure, homodimer.

It is found in the cytoplasm. The enzyme catalyses pseudouridine(1915) in 23S rRNA + S-adenosyl-L-methionine = N(3)-methylpseudouridine(1915) in 23S rRNA + S-adenosyl-L-homocysteine + H(+). Specifically methylates the pseudouridine at position 1915 (m3Psi1915) in 23S rRNA. The protein is Ribosomal RNA large subunit methyltransferase H of Bacillus mycoides (strain KBAB4) (Bacillus weihenstephanensis).